Reading from the N-terminus, the 133-residue chain is uncharacterized protein (133 aa).

This is an uncharacterized protein from Mycobacterium tuberculosis (strain CDC 1551 / Oshkosh).